The sequence spans 393 residues: Dual specificity mitogen-activated protein kinase kinase 1 (393 aa).

A disordered region spans residues 1-27; sequence MPKKKPTPIQLNPAPDGSAVNGTSSAE. The Protein kinase domain maps to 68–361; that stretch reads FEKISELGAG…LKQLMVHAFI (294 aa). ATP-binding positions include 74-82 and Lys-97; that span reads LGAGNGGVV. Asp-190 serves as the catalytic Proton acceptor. Phosphoserine; by RAF occurs at positions 218 and 222. The RAF1-binding stretch occupies residues 270 to 307; it reads ELELLFGCHVEGDAAETPPRPRTPGRPLSSYGMDSRPP. Thr-286 is modified (phosphothreonine). At Thr-292 the chain carries Phosphothreonine; by MAPK1. Ser-298 carries the post-translational modification Phosphoserine; by PAK.

Belongs to the protein kinase superfamily. STE Ser/Thr protein kinase family. MAP kinase kinase subfamily. As to quaternary structure, found in a complex with at least BRAF, HRAS, MAP2K1, MAPK3/ERK1 and RGS14. Forms a heterodimer with MAP2K2/MEK2. Forms heterodimers with KSR2 which further dimerize to form tetramers. Interacts with KSR1 or KSR2 and BRAF; the interaction with KSR1 or KSR2 mediates KSR1-BRAF or KSR2-BRAF dimerization. Interacts with ARBB2, LAMTOR3, MAPK1/ERK2 and RAF1. Interacts with MAPK1/ERK2. Interacts with MORG1. Interacts with PPARG. Interacts with SGK1. Interacts with BIRC6/bruce. Interacts with KAT7; the interaction promotes KAT7 phosphorylation. Interacts with RAF1 and NEK10; the interaction is required for ERK1/2-signaling pathway activation in response to UV irradiation. Interacts with TRAF3IP3. Interacts with MOS. In terms of processing, phosphorylation at Ser-218 and Ser-222 by MAP kinase kinase kinases (BRAF or MEKK1) positively regulates kinase activity. Also phosphorylated at Thr-292 by MAPK1/ERK2 and at Ser-298 by PAK. MAPK1/ERK2 phosphorylation of Thr-292 occurs in response to cellular adhesion and leads to inhibition of Ser-298 phosphorylation by PAK. Autophosphorylated at Ser-218 and Ser-222, autophosphosphorylation is promoted by NEK10 following UV irradiation.

The protein localises to the cytoplasm. It localises to the cytoskeleton. It is found in the microtubule organizing center. Its subcellular location is the centrosome. The protein resides in the spindle pole body. The protein localises to the nucleus. It localises to the membrane. It carries out the reaction L-seryl-[protein] + ATP = O-phospho-L-seryl-[protein] + ADP + H(+). It catalyses the reaction L-threonyl-[protein] + ATP = O-phospho-L-threonyl-[protein] + ADP + H(+). The catalysed reaction is L-tyrosyl-[protein] + ATP = O-phospho-L-tyrosyl-[protein] + ADP + H(+). Ras proteins such as HRAS mediate the activation of RAF proteins such as RAF1 or BRAF which in turn activate extracellular signal-regulated kinases (ERK) through MAPK (mitogen-activated protein kinases) and ERK kinases MAP2K1/MEK1 and MAP2K2/MEK2. Activation occurs through phosphorylation of Ser-218 and Ser-222. MAP2K1/MEK1 binds KSR1 or KSR2 releasing the inhibitory intramolecular interaction between KSR1 or KSR2 protein kinase and N-terminal domains. This allows KSR1 or KSR2 dimerization with BRAF leading to BRAF activation and phosphorylation of MAP2K1. MAP2K1/MEK1 is also the target of negative feed-back regulation by its substrate kinases, such as MAPK1/ERK2. These phosphorylate MAP2K1/MEK1 on Thr-292, thereby facilitating dephosphorylation of the activating residues Ser-218 and Ser-222. Inhibited by serine/threonine phosphatase 2A. Functionally, dual specificity protein kinase which acts as an essential component of the MAP kinase signal transduction pathway. Binding of extracellular ligands such as growth factors, cytokines and hormones to their cell-surface receptors activates RAS and this initiates RAF1 activation. RAF1 then further activates the dual-specificity protein kinases MAP2K1/MEK1 and MAP2K2/MEK2. Both MAP2K1/MEK1 and MAP2K2/MEK2 function specifically in the MAPK/ERK cascade, and catalyze the concomitant phosphorylation of a threonine and a tyrosine residue in a Thr-Glu-Tyr sequence located in the extracellular signal-regulated kinases MAPK3/ERK1 and MAPK1/ERK2, leading to their activation and further transduction of the signal within the MAPK/ERK cascade. Activates BRAF in a KSR1 or KSR2-dependent manner; by binding to KSR1 or KSR2 releases the inhibitory intramolecular interaction between KSR1 or KSR2 protein kinase and N-terminal domains which promotes KSR1 or KSR2-BRAF dimerization and BRAF activation. Depending on the cellular context, this pathway mediates diverse biological functions such as cell growth, adhesion, survival and differentiation, predominantly through the regulation of transcription, metabolism and cytoskeletal rearrangements. One target of the MAPK/ERK cascade is peroxisome proliferator-activated receptor gamma (PPARG), a nuclear receptor that promotes differentiation and apoptosis. MAP2K1/MEK1 has been shown to export PPARG from the nucleus. The MAPK/ERK cascade is also involved in the regulation of endosomal dynamics, including lysosome processing and endosome cycling through the perinuclear recycling compartment (PNRC), as well as in the fragmentation of the Golgi apparatus during mitosis. The polypeptide is Dual specificity mitogen-activated protein kinase kinase 1 (Map2k1) (Mus musculus (Mouse)).